A 643-amino-acid polypeptide reads, in one-letter code: Probable potassium transport system protein Kup (643 aa).

Basic and acidic residues predominate over residues 1 to 12 (MSISSKTEDSDI). The tract at residues 1 to 20 (MSISSKTEDSDIRSSVMTDH) is disordered. A run of 12 helical transmembrane segments spans residues 28-48 (LAGL…TSPL), 65-85 (AGNV…IVGL), 121-141 (WLLV…GMIT), 158-178 (PAFH…LFLF), 187-207 (GALF…LGII), 224-244 (GISF…AVFL), 268-288 (WFLL…ALLL), 301-321 (LVPS…TIIA), 358-378 (IYVP…VAWF), 384-404 (LAAA…ILFY), 415-435 (PAAL…FFGA), and 440-460 (LFHG…IMNT).

The protein belongs to the HAK/KUP transporter (TC 2.A.72) family.

It localises to the cell inner membrane. The catalysed reaction is K(+)(in) + H(+)(in) = K(+)(out) + H(+)(out). Functionally, transport of potassium into the cell. Likely operates as a K(+):H(+) symporter. This is Probable potassium transport system protein Kup from Chlorobium luteolum (strain DSM 273 / BCRC 81028 / 2530) (Pelodictyon luteolum).